The following is a 193-amino-acid chain: uncharacterized protein (193 aa).

Residues 86–181 are a coiled coil; the sequence is TKQRELLEIL…QVEEVQAEVG (96 aa).

This is an uncharacterized protein from Streptococcus pyogenes serotype M6 (strain ATCC BAA-946 / MGAS10394).